The following is a 313-amino-acid chain: Nucleotide-binding protein Swit_0399 (313 aa).

An ATP-binding site is contributed by Gly20–Lys27. Asp73–Thr76 contributes to the GTP binding site. The interval Pro289–Ser313 is disordered. Residues Arg292–Ala303 show a composition bias toward basic and acidic residues.

Belongs to the RapZ-like family.

In terms of biological role, displays ATPase and GTPase activities. The sequence is that of Nucleotide-binding protein Swit_0399 from Rhizorhabdus wittichii (strain DSM 6014 / CCUG 31198 / JCM 15750 / NBRC 105917 / EY 4224 / RW1) (Sphingomonas wittichii).